The chain runs to 273 residues: Lactose transport system permease protein LacG (273 aa).

6 helical membrane passes run 15 to 35 (YSVLSLAAFLSIFPFIWMVIG), 77 to 97 (IALVGTALTLLVSSLAGYGFE), 110 to 130 (VILLTLMVPFAALMIPLFMLM), 134 to 154 (GLLNTHIAIMLPMIASAFIIF), 182 to 204 (FFYIYVPVMRSTYAAAFVIVFML), and 240 to 260 (GTVMIGTILATLPTLLVFFAM). The region spanning 71–260 (FWNSVKIALV…LPTLLVFFAM (190 aa)) is the ABC transmembrane type-1 domain.

It belongs to the binding-protein-dependent transport system permease family. MalFG subfamily.

It is found in the cell inner membrane. Part of the binding-protein-dependent transport system for lactose. Probably responsible for the translocation of the substrate across the membrane. The protein is Lactose transport system permease protein LacG (lacG) of Rhizobium radiobacter (Agrobacterium tumefaciens).